A 284-amino-acid polypeptide reads, in one-letter code: Formamidopyrimidine-DNA glycosylase (284 aa).

Catalysis depends on Pro2, which acts as the Schiff-base intermediate with DNA. Glu3 acts as the Proton donor in catalysis. Lys61 functions as the Proton donor; for beta-elimination activity in the catalytic mechanism. Positions 95, 115, and 157 each coordinate DNA. Residues 243–277 (AVYGRAGQPCRRCGTAIVREPFMNRSSFRCPACQP) form an FPG-type zinc finger. The active-site Proton donor; for delta-elimination activity is Arg267.

The protein belongs to the FPG family. In terms of assembly, monomer. The cofactor is Zn(2+).

The catalysed reaction is Hydrolysis of DNA containing ring-opened 7-methylguanine residues, releasing 2,6-diamino-4-hydroxy-5-(N-methyl)formamidopyrimidine.. It catalyses the reaction 2'-deoxyribonucleotide-(2'-deoxyribose 5'-phosphate)-2'-deoxyribonucleotide-DNA = a 3'-end 2'-deoxyribonucleotide-(2,3-dehydro-2,3-deoxyribose 5'-phosphate)-DNA + a 5'-end 5'-phospho-2'-deoxyribonucleoside-DNA + H(+). Its function is as follows. Involved in base excision repair of DNA damaged by oxidation or by mutagenic agents. Acts as a DNA glycosylase that recognizes and removes damaged bases. Has a preference for oxidized purines, such as 7,8-dihydro-8-oxoguanine (8-oxoG). Has AP (apurinic/apyrimidinic) lyase activity and introduces nicks in the DNA strand. Cleaves the DNA backbone by beta-delta elimination to generate a single-strand break at the site of the removed base with both 3'- and 5'-phosphates. In Acidothermus cellulolyticus (strain ATCC 43068 / DSM 8971 / 11B), this protein is Formamidopyrimidine-DNA glycosylase.